The chain runs to 248 residues: 2,3-bisphosphoglycerate-dependent phosphoglycerate mutase (248 aa).

Residues 8-15 (RHGESTWN), 21-22 (TG), Arg-60, 87-90 (ERHY), Lys-98, and 114-115 (RR) contribute to the substrate site. Residue His-9 is the Tele-phosphohistidine intermediate of the active site. Glu-87 serves as the catalytic Proton donor/acceptor. The interval 117–137 (YDTPPPALEPTDPRASYDDPR) is disordered. Positions 127-137 (TDPRASYDDPR) are enriched in basic and acidic residues. Position 183–184 (183–184 (GN)) interacts with substrate.

Belongs to the phosphoglycerate mutase family. BPG-dependent PGAM subfamily. In terms of assembly, homodimer.

It catalyses the reaction (2R)-2-phosphoglycerate = (2R)-3-phosphoglycerate. It participates in carbohydrate degradation; glycolysis; pyruvate from D-glyceraldehyde 3-phosphate: step 3/5. Its function is as follows. Catalyzes the interconversion of 2-phosphoglycerate and 3-phosphoglycerate. The protein is 2,3-bisphosphoglycerate-dependent phosphoglycerate mutase of Cupriavidus taiwanensis (strain DSM 17343 / BCRC 17206 / CCUG 44338 / CIP 107171 / LMG 19424 / R1) (Ralstonia taiwanensis (strain LMG 19424)).